Here is a 164-residue protein sequence, read N- to C-terminus: NADPH-dependent 7-cyano-7-deazaguanine reductase (164 aa).

Catalysis depends on C55, which acts as the Thioimide intermediate. D62 (proton donor) is an active-site residue. Substrate contacts are provided by residues 77-79 (VES) and 96-97 (HE).

This sequence belongs to the GTP cyclohydrolase I family. QueF type 1 subfamily.

The protein resides in the cytoplasm. It catalyses the reaction 7-aminomethyl-7-carbaguanine + 2 NADP(+) = 7-cyano-7-deazaguanine + 2 NADPH + 3 H(+). Its pathway is tRNA modification; tRNA-queuosine biosynthesis. In terms of biological role, catalyzes the NADPH-dependent reduction of 7-cyano-7-deazaguanine (preQ0) to 7-aminomethyl-7-deazaguanine (preQ1). The polypeptide is NADPH-dependent 7-cyano-7-deazaguanine reductase (Bacillus velezensis (strain DSM 23117 / BGSC 10A6 / LMG 26770 / FZB42) (Bacillus amyloliquefaciens subsp. plantarum)).